The sequence spans 170 residues: Putative apoptosis inhibitor ORF87 (170 aa).

BIR repeat units lie at residues 22–92 (RIKS…PVGK) and 104–169 (RLKS…KLSS).

May act as an apoptosis inhibitor. The sequence is that of Putative apoptosis inhibitor ORF87 from Ostreid herpesvirus 1 (isolate France) (OsHV-1).